Consider the following 337-residue polypeptide: METNLQQVKNSSQTFSEKQNPKQEASPSPISSTCSSPSHDFSFTISLQPLSSSSKHISPTLRSPSKTTSSYQQTDPFAVDLSPADEIFFHGHLLPLHLLSHLPVSPRTSTGSYNDGFTLPVKDILPDQPTNNNNNTENAITNISTEAKDDNTEDKAEGEIRVKTKPIKSFSLFGLSKWRKGFESNEREQEQQQQKIKKPMSLDLSHAVKKYIRMLFQKRGNGTQFWNRRQTSSYSFSSSLMGPNGNSKTMINGSYNKRDLIRGRRGELFSAPASMRTSPTNSGHLRVSTAGLSSSSGSTSSSSSDSTMEELQAAIQAAIAHCKNSSAVDRDDKVKDS.

Positions 1 to 25 (METNLQQVKNSSQTFSEKQNPKQEA) are enriched in polar residues. 2 disordered regions span residues 1-38 (METN…SSPS) and 51-72 (SSSS…SSYQ). Residues 26–38 (SPSPISSTCSSPS) are compositionally biased toward low complexity. The residue at position 211 (tyrosine 211) is a Phosphotyrosine. The segment at 270–310 (SAPASMRTSPTNSGHLRVSTAGLSSSSGSTSSSSSDSTMEE) is disordered. Over residues 288-310 (STAGLSSSSGSTSSSSSDSTMEE) the composition is skewed to low complexity.

As to quaternary structure, interacts (via C-terminus) with BRI1 (via kinase domain). Post-translationally, phosphorylated on Tyr-211 in response to brassinosteroid perception, leading to its inactivation: once phosphorylated, displaced into the cytosol where it is inactive. As to expression, expressed in leaves, petioles, shoot apices, hypocotyls, roots and flowers.

The protein resides in the cell membrane. It localises to the cytoplasm. Functionally, negative regulator of brassinosteroid signaling. When associated to the membrane, limits the interaction of BRI1 with BAK1 by binding to the kinase-inactive form of BRI1. The polypeptide is BRI1 kinase inhibitor 1 (BKI1) (Arabidopsis thaliana (Mouse-ear cress)).